The following is an 87-amino-acid chain: Toxin ICK-42 (87 aa).

The first 19 residues, 1 to 19 (MKPIVYMLLFCAFTVVILG), serve as a signal peptide directing secretion. 4 disulfide bridges follow: Cys40-Cys54, Cys40-Cys77, Cys53-Cys66, and Cys80-Cys87.

Belongs to the neurotoxin 27 (Jztx-72) family. ICK-41 subfamily. In terms of tissue distribution, expressed by the venom gland.

The protein resides in the secreted. Probable neurotoxin with ion channel impairing activity. This is Toxin ICK-42 from Trittame loki (Brush-footed trapdoor spider).